The chain runs to 141 residues: Oleosin L (141 aa).

Transmembrane regions (helical) follow at residues 23–43 (VLFF…LALA), 46–66 (VVLM…ILPV), and 74–94 (AAAF…LIWV). Positions 54 to 65 (PVFLLLSPVILP) match the Proline-knot motif.

It belongs to the oleosin family. In terms of tissue distribution, expressed in megagametophytes (at protein level).

It is found in the lipid droplet. The protein localises to the membrane. The polypeptide is Oleosin L (Pinus massoniana (Chinese red pine)).